The sequence spans 392 residues: Tryptophan synthase beta chain (392 aa).

Lysine 86 is modified (N6-(pyridoxal phosphate)lysine).

It belongs to the TrpB family. As to quaternary structure, tetramer of two alpha and two beta chains. Pyridoxal 5'-phosphate serves as cofactor.

It carries out the reaction (1S,2R)-1-C-(indol-3-yl)glycerol 3-phosphate + L-serine = D-glyceraldehyde 3-phosphate + L-tryptophan + H2O. Its pathway is amino-acid biosynthesis; L-tryptophan biosynthesis; L-tryptophan from chorismate: step 5/5. Functionally, the beta subunit is responsible for the synthesis of L-tryptophan from indole and L-serine. This chain is Tryptophan synthase beta chain (trpB), found in Buchnera aphidicola subsp. Melaphis rhois.